A 198-amino-acid chain; its full sequence is uncharacterized protein (198 aa).

Residues 20–58 (ERVRRDEELARLSADKEQAKNDLEESKRRIARLRGTVYE) are a coiled coil. A disordered region spans residues 144-198 (LSNRKTKNPESDRRRQSRKKKSTQIQASDEMKHRRHHVHKVHHYSQKQSSSTTRR). Residues 176–188 (HRRHHVHKVHHYS) show a composition bias toward basic residues. Polar residues predominate over residues 189–198 (QKQSSSTTRR).

Its subcellular location is the nucleus. The protein resides in the nucleolus. This is an uncharacterized protein from Schizosaccharomyces pombe (strain 972 / ATCC 24843) (Fission yeast).